The following is an 803-amino-acid chain: Pesticidal crystal protein Cry13Aa (803 aa).

It belongs to the delta endotoxin family.

In terms of biological role, endotoxin with nematicidal activity. The chain is Pesticidal crystal protein Cry13Aa (cry13Aa) from Bacillus thuringiensis.